A 298-amino-acid chain; its full sequence is Ribosomal protein L11 methyltransferase (298 aa).

4 residues coordinate S-adenosyl-L-methionine: T139, G163, D185, and N232.

This sequence belongs to the methyltransferase superfamily. PrmA family.

It localises to the cytoplasm. The catalysed reaction is L-lysyl-[protein] + 3 S-adenosyl-L-methionine = N(6),N(6),N(6)-trimethyl-L-lysyl-[protein] + 3 S-adenosyl-L-homocysteine + 3 H(+). Functionally, methylates ribosomal protein L11. This chain is Ribosomal protein L11 methyltransferase, found in Gloeothece citriformis (strain PCC 7424) (Cyanothece sp. (strain PCC 7424)).